The following is a 370-amino-acid chain: Phosphoserine aminotransferase (370 aa).

Residue Arg42 participates in L-glutamate binding. Pyridoxal 5'-phosphate is bound by residues Trp108, Thr158, Asp182, and Gln205. At Lys206 the chain carries N6-(pyridoxal phosphate)lysine. Pyridoxal 5'-phosphate is bound at residue 247–248; it reads NT.

It belongs to the class-V pyridoxal-phosphate-dependent aminotransferase family. SerC subfamily. Homodimer. The cofactor is pyridoxal 5'-phosphate.

It localises to the cytoplasm. The catalysed reaction is O-phospho-L-serine + 2-oxoglutarate = 3-phosphooxypyruvate + L-glutamate. It carries out the reaction 4-(phosphooxy)-L-threonine + 2-oxoglutarate = (R)-3-hydroxy-2-oxo-4-phosphooxybutanoate + L-glutamate. It functions in the pathway amino-acid biosynthesis; L-serine biosynthesis; L-serine from 3-phospho-D-glycerate: step 2/3. It participates in cofactor biosynthesis; pyridoxine 5'-phosphate biosynthesis; pyridoxine 5'-phosphate from D-erythrose 4-phosphate: step 3/5. Catalyzes the reversible conversion of 3-phosphohydroxypyruvate to phosphoserine and of 3-hydroxy-2-oxo-4-phosphonooxybutanoate to phosphohydroxythreonine. This chain is Phosphoserine aminotransferase, found in Albidiferax ferrireducens (strain ATCC BAA-621 / DSM 15236 / T118) (Rhodoferax ferrireducens).